A 271-amino-acid chain; its full sequence is Mannosyl-3-phosphoglycerate phosphatase (271 aa).

Asp13 functions as the Nucleophile in the catalytic mechanism. The Mg(2+) site is built by Asp13, Asp15, and Asp214.

This sequence belongs to the HAD-like hydrolase superfamily. MPGP family. The cofactor is Mg(2+).

Its subcellular location is the cytoplasm. It catalyses the reaction 2-O-(alpha-D-mannosyl)-3-phosphoglycerate + H2O = (2R)-2-O-(alpha-D-mannosyl)-glycerate + phosphate. The chain is Mannosyl-3-phosphoglycerate phosphatase (yedP) from Escherichia coli O6:K15:H31 (strain 536 / UPEC).